The chain runs to 712 residues: Polyribonucleotide nucleotidyltransferase (712 aa).

The Mg(2+) site is built by D493 and D499. The KH domain maps to 560–619 (PRLLTFKVDPEDIGKIIGPGGKMVRSITEATGAKVDISDDGTITVSSSVGGQAEAARAMI). One can recognise an S1 motif domain in the interval 629 to 697 (GQVYLGKVTR…HKGRVNLTRL (69 aa)).

Belongs to the polyribonucleotide nucleotidyltransferase family. Mg(2+) serves as cofactor.

The protein localises to the cytoplasm. The catalysed reaction is RNA(n+1) + phosphate = RNA(n) + a ribonucleoside 5'-diphosphate. In terms of biological role, involved in mRNA degradation. Catalyzes the phosphorolysis of single-stranded polyribonucleotides processively in the 3'- to 5'-direction. This Synechococcus sp. (strain JA-3-3Ab) (Cyanobacteria bacterium Yellowstone A-Prime) protein is Polyribonucleotide nucleotidyltransferase.